We begin with the raw amino-acid sequence, 31 residues long: PTEN upstream open reading frame MP31 (31 aa).

In terms of assembly, interacts with lactate dehydrogenases LDHA and LDHB; interaction with mitochondrial LDH leads to inhibition of lactate dehydrogenase activity, preventing conversion of lactate to pyruvate. Expressed in brain (at protein level). Expressed at lower levels in glioblastomas than in normal brain tissue (at protein level).

It localises to the mitochondrion. Functionally, inhibits lactate dehydrogenase (LDH)-mediated conversion of lactate to pyruvate in mitochondria by competing with mitochondrial LDH for binding to NAD(+). Also inhibits cellular lactate utilization. In Homo sapiens (Human), this protein is PTEN upstream open reading frame MP31.